Consider the following 349-residue polypeptide: MNTLLLHCRPGFEGEVCAEISEHAAILEVAGYAKARPDSACAEFICSEPGGAERLMRRLRFADLIFPRQWARGDYLQLPETDRISVLLAHLADYPVCSSLWLEVLDTNDGKELSNFCRKFEAPLRKALVKAGRLDEQGKGPRLLLTFKSGREVFVGIAEANNSALWPMGIPRLKFPRQAPSRSTLKLEEAWHHFIPREQWDTRLAAGMTGVDLGAAPGGWTWQMVNRHIKVSAVDNGPMNADLMDSGLVEHFRADGFTFRPKRPVDWMVCDIVEKPARNAALLETWIGEGLCREAVVNLKLPMKQRYAEVKRLLERIADGLAERGVKASIGCKQLYHDREEVTCHLRRL.

Residues Ser183, 216-219 (APGG), Asp235, Asp255, and Asp271 each bind S-adenosyl-L-methionine. Catalysis depends on Lys300, which acts as the Proton acceptor.

The protein belongs to the class I-like SAM-binding methyltransferase superfamily. RNA methyltransferase RlmE family. RlmM subfamily. Monomer.

Its subcellular location is the cytoplasm. It catalyses the reaction cytidine(2498) in 23S rRNA + S-adenosyl-L-methionine = 2'-O-methylcytidine(2498) in 23S rRNA + S-adenosyl-L-homocysteine + H(+). Catalyzes the 2'-O-methylation at nucleotide C2498 in 23S rRNA. The chain is Ribosomal RNA large subunit methyltransferase M from Stutzerimonas stutzeri (strain A1501) (Pseudomonas stutzeri).